A 272-amino-acid polypeptide reads, in one-letter code: Formamidopyrimidine-DNA glycosylase (272 aa).

Pro-2 acts as the Schiff-base intermediate with DNA in catalysis. Glu-3 functions as the Proton donor in the catalytic mechanism. Lys-57 functions as the Proton donor; for beta-elimination activity in the catalytic mechanism. The DNA site is built by His-90, Arg-109, and Lys-150. The FPG-type zinc finger occupies 235–269 (HVYGRAKKKCLLCSSIIQEEKIGQRNTFWCGHCQP). Arg-259 (proton donor; for delta-elimination activity) is an active-site residue.

This sequence belongs to the FPG family. In terms of assembly, monomer. Requires Zn(2+) as cofactor.

It catalyses the reaction Hydrolysis of DNA containing ring-opened 7-methylguanine residues, releasing 2,6-diamino-4-hydroxy-5-(N-methyl)formamidopyrimidine.. The enzyme catalyses 2'-deoxyribonucleotide-(2'-deoxyribose 5'-phosphate)-2'-deoxyribonucleotide-DNA = a 3'-end 2'-deoxyribonucleotide-(2,3-dehydro-2,3-deoxyribose 5'-phosphate)-DNA + a 5'-end 5'-phospho-2'-deoxyribonucleoside-DNA + H(+). Involved in base excision repair of DNA damaged by oxidation or by mutagenic agents. Acts as a DNA glycosylase that recognizes and removes damaged bases. Has a preference for oxidized purines, such as 7,8-dihydro-8-oxoguanine (8-oxoG). Has AP (apurinic/apyrimidinic) lyase activity and introduces nicks in the DNA strand. Cleaves the DNA backbone by beta-delta elimination to generate a single-strand break at the site of the removed base with both 3'- and 5'-phosphates. This Aliivibrio fischeri (strain ATCC 700601 / ES114) (Vibrio fischeri) protein is Formamidopyrimidine-DNA glycosylase.